A 222-amino-acid polypeptide reads, in one-letter code: uncharacterized protein (222 aa).

Positions 8–77 constitute an HTH gntR-type domain; sequence AKKGQIIYRY…GNAGYFVAKN (70 aa).

This is an uncharacterized protein from Mycoplasma pneumoniae (strain ATCC 29342 / M129 / Subtype 1) (Mycoplasmoides pneumoniae).